Reading from the N-terminus, the 228-residue chain is Small ribosomal subunit protein uS3 (228 aa).

The region spanning 39 to 107 is the KH type-2 domain; sequence VREYLQDKLK…PVHINIEEIR (69 aa).

Belongs to the universal ribosomal protein uS3 family. As to quaternary structure, part of the 30S ribosomal subunit. Forms a tight complex with proteins S10 and S14.

Its function is as follows. Binds the lower part of the 30S subunit head. Binds mRNA in the 70S ribosome, positioning it for translation. This chain is Small ribosomal subunit protein uS3, found in Pseudomonas fluorescens (strain ATCC BAA-477 / NRRL B-23932 / Pf-5).